A 456-amino-acid polypeptide reads, in one-letter code: Anthocyanidin 3-O-glucosyltransferase UFGT (456 aa).

A kaempferol-binding site is contributed by Ser18. Ser18 serves as a coordination point for quercetin. Residue Thr19 participates in UDP binding. Position 19 (Thr19) interacts with UDP-alpha-D-glucose. His20 and Gln84 together coordinate kaempferol. His20 acts as the Proton acceptor in catalysis. Residue Gln84 coordinates quercetin. Asp119 (charge relay) is an active-site residue. Thr141 is a UDP-alpha-D-glucose binding site. His150 and Gln188 together coordinate kaempferol. Residues His150 and Gln188 each coordinate quercetin. Positions 280, 306, 332, 333, and 350 each coordinate UDP. The UDP-alpha-D-glucose site is built by Thr280, Ser306, Trp332, Ala333, His350, Trp353, Asn354, Ser355, and Glu358. UDP-binding residues include Asn354, Ser355, and Glu358. Gly373 is a quercetin binding site. UDP-alpha-D-glucose contacts are provided by Asp374 and Gln375.

The protein belongs to the UDP-glycosyltransferase family. In terms of tissue distribution, detected only in berry skin.

It carries out the reaction an anthocyanidin + UDP-alpha-D-glucose + H(+) = an anthocyanidin 3-O-beta-D-glucoside + UDP. The catalysed reaction is cyanidin + UDP-alpha-D-glucose = cyanidin 3-O-beta-D-glucoside + UDP + H(+). The enzyme catalyses delphinidin + UDP-alpha-D-glucose = delphinidin 3-O-beta-D-glucoside + UDP. It catalyses the reaction peonidin + UDP-alpha-D-glucose = peonidin 3-O-beta-D-glucoside + UDP. It carries out the reaction pelargonidin + UDP-alpha-D-glucose = pelargonidin 3-O-beta-D-glucoside + UDP. The catalysed reaction is malvidin + UDP-alpha-D-glucose = malvidin 3-O-beta-D-glucoside + UDP. The enzyme catalyses a flavonol + UDP-alpha-D-glucose = a flavonol 3-O-beta-D-glucoside + UDP + H(+). It participates in pigment biosynthesis; anthocyanin biosynthesis. With respect to regulation, inhibited by Mn(2+) and Zn(2+). In the presence of other necessary color factors, this glycosylation reaction allows the accumulation of anthocyanin pigments. Involved in the formation of red wine pigments. UDP-glucose (UDP-Glc) is the physiological sugar donor, and cyanidin is the natural acceptor in vivo. Can glucosylate the anthocyanidins delphinidin, peonidin, pelargonidin and malvidin. The flavonols quercitin and kaempferol can also be glucosylated in vitro, but with glucosylation rates 50-100 times lower than cyanidin. In vitro, can use UDP-Glc, UDP-5SGlc, UDP-Xyl, UDP-Man, UDP-Gal, UDP-GlcNAc, GDP-Glc, dTDP-Glc and dTDP-Xyl as sugar donors, but not UDP-6OMeGal, UDP-Ara, UDP-6FGal, UDP-GlcN, UDP-2FGal, UDP-5SAra, GDP-Man, GDP-Fuc, UDP-Fuc or UDP-Rha. The protein is Anthocyanidin 3-O-glucosyltransferase UFGT of Vitis vinifera (Grape).